The primary structure comprises 90 residues: Evasin P1128 (90 aa).

Residues 1-18 (MFIALGIQLFVAVTYAAG) form the signal peptide. Cystine bridges form between Cys-29-Cys-51, Cys-33-Cys-53, and Cys-44-Cys-64. Asn-32 is a glycosylation site (N-linked (GlcNAc...) asparagine).

The protein resides in the secreted. Its function is as follows. Salivary chemokine-binding protein which binds to host chemokines CXCL1, CXCL2, CXCL3, CXCL5 and CXCL8. The chain is Evasin P1128 from Ixodes ricinus (Common tick).